We begin with the raw amino-acid sequence, 579 residues long: YTH domain-containing family protein 2 (579 aa).

The tract at residues 1 to 45 (MSASSLLEQRPKGQGNKVQNGSVHQKDGLNDDDFEPYLSPQARPN) is disordered. At Ser2 the chain carries N-acetylserine. 6 positions are modified to phosphoserine: Ser2, Ser4, Ser5, Ser22, Ser39, and Ser196. The segment at 2–384 (SASSLLEQRP…QAGSGSTPSE (383 aa)) is localization to mRNA processing bodies (P-bodies). Positions 247 to 387 (AKQQPKLKTK…SGSTPSEPHP (141 aa)) are disordered. Residues 291–316 (ALVQNIGQPTQGSPQPVGQQANNSPP) show a composition bias toward polar residues. Positions 337 to 349 (AQLSVQQQAAQPT) are enriched in low complexity. Ser359 carries the phosphoserine modification. Over residues 359 to 371 (SGFGHNGVDGNGV) the composition is skewed to gly residues. Polar residues predominate over residues 372–383 (GQSQAGSGSTPS). Residues 385–579 (PHPVLEKLRS…VKKERQGRGK (195 aa)) are interaction with m6A-containing mRNAs. Ser394 is modified (phosphoserine). Positions 410–544 (GRVFIIKSYS…EKAKQVLKII (135 aa)) constitute a YTH domain. RNA contacts are provided by residues 416–418 (KSY), Asp422, 432–433 (WC), Asn462, Trp486, and Trp491.

It belongs to the YTHDF family. YTHDF2 subfamily. As to quaternary structure, interacts with CNOT1; interaction is direct and promotes recruitment of the CCR4-NOT complex. Interacts with YTHDF3. Interacts with RIDA/HRSP12; interaction leads to recruitment of the ribonuclease P/MRP complex. In terms of processing, ubiquitinated by the SCF(SKP2) complex, leading to its degradation. In terms of tissue distribution, highly expressed in induced pluripotent stem cells (iPSCs) and down-regulated during neural differentiation.

The protein resides in the cytoplasm. It localises to the cytosol. Its subcellular location is the P-body. It is found in the stress granule. The protein localises to the nucleus. In terms of biological role, specifically recognizes and binds N6-methyladenosine (m6A)-containing RNAs, and regulates their stability. M6A is a modification present at internal sites of mRNAs and some non-coding RNAs and plays a role in mRNA stability and processing. Acts as a regulator of mRNA stability by promoting degradation of m6A-containing mRNAs via interaction with the CCR4-NOT and ribonuclease P/MRP complexes, depending on the context. The YTHDF paralogs (YTHDF1, YTHDF2 and YTHDF3) share m6A-containing mRNAs targets and act redundantly to mediate mRNA degradation and cellular differentiation. M6A-containing mRNAs containing a binding site for RIDA/HRSP12 (5'-GGUUC-3') are preferentially degraded by endoribonucleolytic cleavage: cooperative binding of RIDA/HRSP12 and YTHDF2 to transcripts leads to recruitment of the ribonuclease P/MRP complex. Other m6A-containing mRNAs undergo deadenylation via direct interaction between YTHDF2 and CNOT1, leading to recruitment of the CCR4-NOT and subsequent deadenylation of m6A-containing mRNAs. Required maternally to regulate oocyte maturation: probably acts by binding to m6A-containing mRNAs, thereby regulating maternal transcript dosage during oocyte maturation, which is essential for the competence of oocytes to sustain early zygotic development. Also required during spermatogenesis: regulates spermagonial adhesion by promoting degradation of m6A-containing transcripts coding for matrix metallopeptidases. Also involved in hematopoietic stem cells specification by binding to m6A-containing mRNAs, leading to promote their degradation. Also acts as a regulator of neural development by promoting m6A-dependent degradation of neural development-related mRNA targets. Inhibits neural specification of induced pluripotent stem cells by binding to methylated neural-specific mRNAs and promoting their degradation, thereby restraining neural differentiation. Regulates circadian regulation of hepatic lipid metabolism: acts by promoting m6A-dependent degradation of PPARA transcripts. Regulates the innate immune response to infection by inhibiting the type I interferon response: acts by binding to m6A-containing IFNB transcripts and promoting their degradation. May also act as a promoter of cap-independent mRNA translation following heat shock stress: upon stress, relocalizes to the nucleus and specifically binds mRNAs with some m6A methylation mark at their 5'-UTR, protecting demethylation of mRNAs by FTO, thereby promoting cap-independent mRNA translation. Regulates mitotic entry by promoting the phase-specific m6A-dependent degradation of WEE1 transcripts. Promotes formation of phase-separated membraneless compartments, such as P-bodies or stress granules, by undergoing liquid-liquid phase separation upon binding to mRNAs containing multiple m6A-modified residues: polymethylated mRNAs act as a multivalent scaffold for the binding of YTHDF proteins, juxtaposing their disordered regions and thereby leading to phase separation. The resulting mRNA-YTHDF complexes then partition into different endogenous phase-separated membraneless compartments, such as P-bodies, stress granules or neuronal RNA granules. May also recognize and bind RNAs modified by C5-methylcytosine (m5C) and act as a regulator of rRNA processing. (Microbial infection) Promotes viral gene expression and replication of polyomavirus SV40: acts by binding to N6-methyladenosine (m6A)-containing viral RNAs. Its function is as follows. (Microbial infection) Promotes viral gene expression and virion production of kaposis sarcoma-associated herpesvirus (KSHV) at some stage of the KSHV life cycle (in iSLK.219 and iSLK.BAC16 cells). Acts by binding to N6-methyladenosine (m6A)-containing viral RNAs. The polypeptide is YTH domain-containing family protein 2 (Homo sapiens (Human)).